Reading from the N-terminus, the 327-residue chain is Transaldolase (327 aa).

Lys132 serves as the catalytic Schiff-base intermediate with substrate.

The protein belongs to the transaldolase family. Type 1 subfamily.

It is found in the cytoplasm. The catalysed reaction is D-sedoheptulose 7-phosphate + D-glyceraldehyde 3-phosphate = D-erythrose 4-phosphate + beta-D-fructose 6-phosphate. The protein operates within carbohydrate degradation; pentose phosphate pathway; D-glyceraldehyde 3-phosphate and beta-D-fructose 6-phosphate from D-ribose 5-phosphate and D-xylulose 5-phosphate (non-oxidative stage): step 2/3. Its function is as follows. Transaldolase is important for the balance of metabolites in the pentose-phosphate pathway. In Chlamydia pneumoniae (Chlamydophila pneumoniae), this protein is Transaldolase.